Here is a 493-residue protein sequence, read N- to C-terminus: Adenylyltransferase and sulfurtransferase uba4 (493 aa).

Residues Gly-99, Asp-120, 127 to 131, Lys-144, and 188 to 189 contribute to the ATP site; these read SNLHR and DN. The Zn(2+) site is built by Cys-237 and Cys-240. The Glycyl thioester intermediate; for adenylyltransferase activity role is filled by Cys-254. The Zn(2+) site is built by Cys-316 and Cys-319. Residues 376–491 enclose the Rhodanese domain; it reads INKEPTIIDV…WREQIDPDWP (116 aa). Catalysis depends on Cys-446, which acts as the Cysteine persulfide intermediate; for sulfurtransferase activity.

This sequence in the N-terminal section; belongs to the HesA/MoeB/ThiF family. UBA4 subfamily. It depends on Zn(2+) as a cofactor.

It is found in the cytoplasm. It localises to the cytosol. It catalyses the reaction [molybdopterin-synthase sulfur-carrier protein]-C-terminal Gly-Gly + ATP + H(+) = [molybdopterin-synthase sulfur-carrier protein]-C-terminal Gly-Gly-AMP + diphosphate. The catalysed reaction is [molybdopterin-synthase sulfur-carrier protein]-C-terminal Gly-Gly-AMP + S-sulfanyl-L-cysteinyl-[cysteine desulfurase] + AH2 = [molybdopterin-synthase sulfur-carrier protein]-C-terminal-Gly-aminoethanethioate + L-cysteinyl-[cysteine desulfurase] + A + AMP + 2 H(+). It participates in tRNA modification; 5-methoxycarbonylmethyl-2-thiouridine-tRNA biosynthesis. It functions in the pathway cofactor biosynthesis; molybdopterin biosynthesis. In terms of biological role, plays a central role in 2-thiolation of mcm(5)S(2)U at tRNA wobble positions of cytosolic tRNA(Lys), tRNA(Glu) and tRNA(Gln). Also essential during biosynthesis of the molybdenum cofactor. Acts by mediating the C-terminal thiocarboxylation of sulfur carriers urm1 and mocs2a. Its N-terminus first activates urm1 and mocs2a as acyl-adenylates (-COAMP), then the persulfide sulfur on the catalytic cysteine is transferred to urm1 and mocs2a to form thiocarboxylation (-COSH) of their C-terminus. The reaction probably involves hydrogen sulfide that is generated from the persulfide intermediate and that acts as a nucleophile towards urm1 and mocs2a. Subsequently, a transient disulfide bond is formed. Does not use thiosulfate as sulfur donor; nfs1 probably acting as a sulfur donor for thiocarboxylation reactions. In Aspergillus fumigatus (strain ATCC MYA-4609 / CBS 101355 / FGSC A1100 / Af293) (Neosartorya fumigata), this protein is Adenylyltransferase and sulfurtransferase uba4.